The following is a 245-amino-acid chain: uncharacterized protein (245 aa).

The first 18 residues, 1–18, serve as a signal peptide directing secretion; that stretch reads MKSAAILALLAQALAVTA. Residues 21-66 are disordered; that stretch reads VEGDRTPGTRTLDLPNFPGGSVPTRGVEKRADLPPDNGGGNAPDPD. Residues Asn-189 and Asn-225 are each glycosylated (N-linked (GlcNAc...) asparagine).

Its subcellular location is the secreted. This is an uncharacterized protein from Arthroderma benhamiae (strain ATCC MYA-4681 / CBS 112371) (Trichophyton mentagrophytes).